The primary structure comprises 229 residues: uncharacterized protein (229 aa).

This is an uncharacterized protein from Ureaplasma parvum serovar 3 (strain ATCC 700970).